Here is a 341-residue protein sequence, read N- to C-terminus: Processive diacylglycerol beta-glycosyltransferase (341 aa).

This sequence belongs to the glycosyltransferase 2 family. Mg(2+) is required as a cofactor.

It localises to the cell membrane. It catalyses the reaction a 1,2-diacyl-sn-glycerol + UDP-alpha-D-glucose = a 1,2-diacyl-3-O-(beta-D-glucopyranosyl)-sn-glycerol + UDP + H(+). The enzyme catalyses a 1,2-diacyl-sn-glycerol + UDP-alpha-D-galactose = a 1,2-diacyl-3-O-(beta-D-galactosyl)-sn-glycerol + UDP + H(+). The catalysed reaction is a 1,2-diacyl-3-O-(beta-D-glucopyranosyl)-sn-glycerol + UDP-alpha-D-glucose = a 1,2-diacyl-3-O-(beta-D-Glc-(1-&gt;6)-beta-D-Glc)-sn-glycerol + UDP + H(+). It carries out the reaction a 1,2-diacyl-3-O-(beta-D-galactosyl)-sn-glycerol + UDP-alpha-D-galactose = a 1,2-diacyl-3-O-[beta-D-galactosyl-(1-&gt;6)-beta-D-galactosyl]-sn-glycerol + UDP + H(+). Its pathway is glycolipid metabolism; diglucosyl-diacylglycerol biosynthesis. With respect to regulation, activated by the negatively charged lipid dioleoylphosphatidylglycerol (DOPG) and inhibited by N-(n-nonyl)deoxygalactonojirimycin (C9J). Its function is as follows. Processive glycosyltransferase involved in the biosynthesis of both the non-bilayer-prone beta-monoglycosyldiacylglycerol and the bilayer-forming membrane lipid beta-diglycosyldiacylglycerol. These components contribute to regulate the properties and stability of the membrane. Catalyzes sequentially the transfers of glucosyl or galactosyl residues from UDP-Glc or UDP-Gal to diacylglycerol (DAG) acceptor to form the corresponding beta-glycosyl-DAG (3-O-(beta-D-glycopyranosyl)-1,2-diacyl-sn-glycerol), which then acts as acceptor to give beta-diglycosyl-DAG product (3-O-(beta-D-glycopyranosyl-beta-(1-&gt;6)-D-glycopyranosyl)-1,2-diacyl-sn-glycerol). Dioleoylglycerol (DOG) is a preferred sugar acceptor than 3-O-(beta-D-glucopyranosyl)-1,2-dioleoyl-sn-glycerol. The chain is Processive diacylglycerol beta-glycosyltransferase from Mycoplasma genitalium (strain ATCC 33530 / DSM 19775 / NCTC 10195 / G37) (Mycoplasmoides genitalium).